The sequence spans 386 residues: Copper-containing nitrite reductase (386 aa).

Positions 1–18 are cleaved as a signal peptide; that stretch reads MKRQALAAIIASMFALAA. Residue cysteine 19 is the site of N-palmitoyl cysteine attachment. A lipid anchor (S-diacylglycerol cysteine) is attached at cysteine 19. Plastocyanin-like domains follow at residues 97–191 and 241–342; these read WTFD…ILVE and GHVG…LKVE. Residues histidine 130, histidine 135, histidine 170, cysteine 171, histidine 179, and methionine 184 each contribute to the Cu cation site. Histidine 135 lines the substrate pocket. Histidine 276 contributes to the substrate binding site. Residue histidine 325 coordinates Cu cation. The interval 363–386 is disordered; the sequence is GAAPAASAPAASAPAASAPAKSDY. Residues 364-386 show a composition bias toward low complexity; the sequence is AAPAASAPAASAPAASAPAKSDY. Repeat copies occupy residues 367–371, 372–376, and 377–381. The tract at residues 367–381 is 3 X 5 AA tandem repeats of A-A-S-A-P; that stretch reads AASAPAASAPAASAP.

This sequence belongs to the multicopper oxidase family. As to quaternary structure, homotrimer. The cofactor is Cu(+). Cu(2+) is required as a cofactor.

Its subcellular location is the cell outer membrane. It catalyses the reaction nitric oxide + Fe(III)-[cytochrome c] + H2O = Fe(II)-[cytochrome c] + nitrite + 2 H(+). Its function is as follows. Catalyzes the reduction of nitrite to nitric oxide (NO). It could be essential for growth and survival in oxygen-depleted environments. This Neisseria meningitidis serogroup A / serotype 4A (strain DSM 15465 / Z2491) protein is Copper-containing nitrite reductase (aniA).